The following is a 126-amino-acid chain: Protein ApaG (126 aa).

The ApaG domain maps to 2–126 (SFPIDSIKIK…FRLAMPGVMQ (125 aa)).

This Shewanella denitrificans (strain OS217 / ATCC BAA-1090 / DSM 15013) protein is Protein ApaG.